A 340-amino-acid chain; its full sequence is Anthranilate phosphoribosyltransferase (340 aa).

5-phospho-alpha-D-ribose 1-diphosphate is bound by residues glycine 80, 83–84 (GD), threonine 88, 90–93 (NIST), 108–116 (KHGNRAMSS), and serine 120. Glycine 80 is a binding site for anthranilate. A Mg(2+)-binding site is contributed by serine 92. Asparagine 111 provides a ligand contact to anthranilate. Arginine 166 contributes to the anthranilate binding site. Mg(2+)-binding residues include aspartate 225 and glutamate 226.

Belongs to the anthranilate phosphoribosyltransferase family. Homodimer. Requires Mg(2+) as cofactor.

The catalysed reaction is N-(5-phospho-beta-D-ribosyl)anthranilate + diphosphate = 5-phospho-alpha-D-ribose 1-diphosphate + anthranilate. It functions in the pathway amino-acid biosynthesis; L-tryptophan biosynthesis; L-tryptophan from chorismate: step 2/5. Catalyzes the transfer of the phosphoribosyl group of 5-phosphorylribose-1-pyrophosphate (PRPP) to anthranilate to yield N-(5'-phosphoribosyl)-anthranilate (PRA). The protein is Anthranilate phosphoribosyltransferase of Chloroflexus aggregans (strain MD-66 / DSM 9485).